The sequence spans 465 residues: Endo-1,3-1,4-beta-glycanase ExsH (465 aa).

3 Hemolysin-type calcium-binding repeats span residues 33–50, 105–122, and 123–140; these read HGTA…VNVT, FGNE…TQTI, and DGRG…ADTF. A GH16 domain is found at 206 to 462; that stretch reads AHQFRLSLDR…YIKAYSLDAD (257 aa). The Nucleophile role is filled by E349. E354 serves as the catalytic Proton donor.

Belongs to the glycosyl hydrolase 16 family.

Its subcellular location is the secreted. Its pathway is glycan metabolism; exopolysaccharide biosynthesis. Cleaves high molecular weight succinoglycan to yield LMW succinoglycan. Dynamically regulates the molecular weight distribution of succinoglycan by cleaving nascent succinoglycan only during a limited period after its synthesis, perhaps before it undergoes a time-dependent change in its conformation or aggregation state. The sequence is that of Endo-1,3-1,4-beta-glycanase ExsH (exsH) from Rhizobium meliloti (strain 1021) (Ensifer meliloti).